A 294-amino-acid chain; its full sequence is Acetyl-coenzyme A carboxylase carboxyl transferase subunit beta (294 aa).

Positions 25 to 294 (VWTKCTSCEQ…PLVVPVDGSH (270 aa)) constitute a CoA carboxyltransferase N-terminal domain. C29, C32, C48, and C51 together coordinate Zn(2+). The segment at 29-51 (CTSCEQVLYSAELERNLEVCPKC) adopts a C4-type zinc-finger fold.

It belongs to the AccD/PCCB family. Acetyl-CoA carboxylase is a heterohexamer composed of biotin carboxyl carrier protein (AccB), biotin carboxylase (AccC) and two subunits each of ACCase subunit alpha (AccA) and ACCase subunit beta (AccD). The cofactor is Zn(2+).

It is found in the cytoplasm. It carries out the reaction N(6)-carboxybiotinyl-L-lysyl-[protein] + acetyl-CoA = N(6)-biotinyl-L-lysyl-[protein] + malonyl-CoA. Its pathway is lipid metabolism; malonyl-CoA biosynthesis; malonyl-CoA from acetyl-CoA: step 1/1. Its function is as follows. Component of the acetyl coenzyme A carboxylase (ACC) complex. Biotin carboxylase (BC) catalyzes the carboxylation of biotin on its carrier protein (BCCP) and then the CO(2) group is transferred by the transcarboxylase to acetyl-CoA to form malonyl-CoA. The protein is Acetyl-coenzyme A carboxylase carboxyl transferase subunit beta of Aliivibrio fischeri (strain ATCC 700601 / ES114) (Vibrio fischeri).